Consider the following 410-residue polypeptide: Peptidase T (410 aa).

Zn(2+) is bound at residue His-79. Asp-81 is a catalytic residue. Asp-142 is a Zn(2+) binding site. Glu-176 serves as the catalytic Proton acceptor. The Zn(2+) site is built by Glu-177, Asp-199, and His-381.

Belongs to the peptidase M20B family. Zn(2+) serves as cofactor.

Its subcellular location is the cytoplasm. The catalysed reaction is Release of the N-terminal residue from a tripeptide.. In terms of biological role, cleaves the N-terminal amino acid of tripeptides. The sequence is that of Peptidase T from Geobacillus sp. (strain WCH70).